Reading from the N-terminus, the 295-residue chain is Proline iminopeptidase (295 aa).

One can recognise an AB hydrolase-1 domain in the interval 29–279; sequence PLLLLHGGPG…GCGHMPFVQE (251 aa). Serine 107 functions as the Nucleophile in the catalytic mechanism. The active site involves aspartate 246. Catalysis depends on histidine 273, which acts as the Proton donor.

It belongs to the peptidase S33 family.

It is found in the cell envelope. The catalysed reaction is Release of N-terminal proline from a peptide.. Its function is as follows. Releases the N-terminal proline from various substrates. In Lactobacillus delbrueckii subsp. bulgaricus (strain ATCC 11842 / DSM 20081 / BCRC 10696 / JCM 1002 / NBRC 13953 / NCIMB 11778 / NCTC 12712 / WDCM 00102 / Lb 14), this protein is Proline iminopeptidase.